A 146-amino-acid polypeptide reads, in one-letter code: Snaclec mucetin subunit beta (146 aa).

Positions methionine 1–alanine 23 are cleaved as a signal peptide. Intrachain disulfides connect cysteine 27–cysteine 38, cysteine 55–cysteine 144, and cysteine 121–cysteine 136. Residues tyrosine 34–lysine 145 form the C-type lectin domain.

Belongs to the snaclec family. Dimer and tetramer of heterodimers of alpha and beta subunits ((alphabeta)(2) and (alphabeta)(4)); disulfide-linked. These two multimeric forms are found. Post-translationally, the complex is glycosylated. Expressed by the venom gland.

The protein localises to the secreted. Potent platelet activator that acts via GPIb (GP1BA/GP1BB). After activation by the toxin, the receptor is redistributed on platelet surface thanks to cytoskeletal translocation. The indirect activation of integrin alpha-IIb/beta-3 (ITGA2B/ITGB3) also induced by the toxin is downstream the cytoskeletal translocation of GPIb. This chain is Snaclec mucetin subunit beta, found in Protobothrops mucrosquamatus (Taiwan habu).